The following is a 322-amino-acid chain: Ribose 1,5-bisphosphate isomerase (322 aa).

Substrate contacts are provided by residues 20-23 and R63; that span reads RGAG. C133 acts as the Proton acceptor in catalysis. Residue 135-137 participates in substrate binding; it reads SKA. D202 serves as the catalytic Proton donor. Residues 212-213 and K238 each bind substrate; that span reads NK.

It belongs to the eIF-2B alpha/beta/delta subunits family. R15P isomerase subfamily. As to quaternary structure, homohexamer; trimer of dimers.

The catalysed reaction is alpha-D-ribose 1,5-bisphosphate = D-ribulose 1,5-bisphosphate. Its activity is regulated as follows. Is highly activated in the presence of AMP, with an increase of &gt;40-fold in activity levels. Among other nucleotides, isomerase activity is slightly increased in the presence of GMP, but CMP, UMP, TMP, and NAD(+) have no effect; therefore, AMP is likely the major activator of R15P isomerase in vivo. To a lesser extent, various compounds with an adenosyl moiety, such as dAMP, adenosine, or methylthioadenosine, can also act as activators. The regulation of this enzyme by AMP prevents excess degradation of intracellular AMP by the archaeal AMP degradation pathway. Catalyzes the isomerization of ribose 1,5-bisphosphate (R15P) to ribulose 1,5-bisphosphate (RuBP), the CO(2) acceptor and substrate for RubisCO. Only accepts the alpha-anomer of D-ribose 1,5-bisphosphate as substrate, being inactive on the beta-anomer. Displays a strict substrate specificity, since other phosphorylated sugars such as R5P, ribose, G16P, G6P, G1P, FBP, F6P, and PRPP, are not substrates. Functions in an archaeal AMP degradation pathway, together with AMP phosphorylase and RubisCO. The chain is Ribose 1,5-bisphosphate isomerase from Thermococcus kodakarensis (strain ATCC BAA-918 / JCM 12380 / KOD1) (Pyrococcus kodakaraensis (strain KOD1)).